The following is a 177-amino-acid chain: Large ribosomal subunit protein uL6 (177 aa).

This sequence belongs to the universal ribosomal protein uL6 family. In terms of assembly, part of the 50S ribosomal subunit.

Its function is as follows. This protein binds to the 23S rRNA, and is important in its secondary structure. It is located near the subunit interface in the base of the L7/L12 stalk, and near the tRNA binding site of the peptidyltransferase center. The polypeptide is Large ribosomal subunit protein uL6 (Vibrio vulnificus (strain CMCP6)).